We begin with the raw amino-acid sequence, 347 residues long: Dual specificity mitogen-activated protein kinase kinase mek-1 (347 aa).

Residues 1 to 42 are disordered; sequence MERDFDLGMGRPGGLGGLGGEPIMQQMPQPAPHHPSRSSNDH. Gly residues predominate over residues 10–20; that stretch reads GRPGGLGGLGG. In terms of domain architecture, Protein kinase spans 72 to 325; that stretch reads LQFVEDIGHG…YDMLLQHPFV (254 aa). Residues 78 to 86 and Lys-99 each bind ATP; that span reads IGHGSCGTV. The Proton acceptor role is filled by Asp-193. Residues Ser-221 and Ser-225 each carry the phosphoserine modification.

The protein belongs to the protein kinase superfamily. STE Ser/Thr protein kinase family. MAP kinase kinase subfamily. As to quaternary structure, interacts with shc-1; the interaction is independent of mek-1 catalytic activity, is constitutive and may facilitate mlk-1-mediated phosphorylation by bringing mlk-1 and mek-1 together. Mg(2+) is required as a cofactor. In terms of processing, may be phosphorylated at Ser-221 and/or Ser-225 by mlk-1. In terms of tissue distribution, expressed in pharyngeal muscles, uterine endothelial cells, intestine and in neurons of ring ganglia, ventral ganglion and ganglia around anus. Expressed also in hypodermis and body muscles.

The catalysed reaction is L-seryl-[protein] + ATP = O-phospho-L-seryl-[protein] + ADP + H(+). The enzyme catalyses L-threonyl-[protein] + ATP = O-phospho-L-threonyl-[protein] + ADP + H(+). It catalyses the reaction L-tyrosyl-[protein] + ATP = O-phospho-L-tyrosyl-[protein] + ADP + H(+). May be activated by phosphorylation at Ser-221 and Ser-225. Dual specificity protein kinase which may phosphorylate kgb-1 and thereby is an essential component of the JNK pathway composed of mlk-1, mek-1 and kgb-1. May also have a synergistic role with sek-1 in phosphorylating pmk-1. Involved in the response to environmental stress including heavy metal ions (Cu(2+) and Cd(2+)), oxidative stress and starvation. In association with sek-1, regulates germline cell apoptosis in response to oxidative, osmotic and heat shock stresses. Involved in resistance to pathogenic bacteria infection. Involved in axon regeneration after injury. In Caenorhabditis elegans, this protein is Dual specificity mitogen-activated protein kinase kinase mek-1.